The chain runs to 238 residues: MATYAILGSTGNCGSAIIQNLLKSPNNKVHAYCRNQTKLQRLIPEVVDNKNVQIFQGSIYDVELLADCVRGTKAVFLVVTTNDNVPGCRVSRDCATSVIQALQKIKAEASPGLKLPKLVLLSSATIDDHLARHMPGWFRPIMLAAASHVYEDLRLTEVFLRSHADWVSSIFIKPAGLSVDVSRGHKLTLDEEESFISYLDLSAGMIEAAADDESRYDGRNVGVELSSRGELRCVLSWD.

The protein belongs to the avfA family.

It functions in the pathway secondary metabolite biosynthesis. Functionally, oxidoreductase; part of the gene cluster that mediates the biosynthesis of the dimeric xanthones cryptosporioptides. The pathway begins with the synthesis of atrochrysone thioester by the polyketide synthase dmx-nrPKS. The atrochrysone carboxyl ACP thioesterase dmxR1 then breaks the thioester bond and releases the atrochrysone carboxylic acid from dmx-nrPKS. Atrochrysone carboxylic acid is decarboxylated by the decarboxylase dmxR15, and oxidized by the anthrone oxygenase dmxR16 to yield emodin. Emodin is then reduced to emodin hydroquinone by the oxidoreductase dmxR7. A-ring reduction by the short chain dehydrogenase dmxR18, dehydration by the scytalone dehydratase-like protein dmxR17 and probable spontaneous re-oxidation, results in overall deoxygenation to chrysophanol. Baeyer-Villiger oxidation by the Baeyer-Villiger monooxygenase (BVMO) dmxR6 then yields monodictylactone in equilibrium with monodictyphenone. In the case of the cryptosporioptides biosynthesis, monodictylactone is reduced at C-12 to an alcohol (by the short chain dehydrogenases dmxR12 or dmxR8) and hydroxylated at C-5 by dmxR9, yielding the electron-rich aromatic which could eliminate H(2)O to form the ortho-quinonemethide, followed by tautomerisation to paraquinone and complete the formal reduction to produce the 10-methylgroup. Conjugate addition of C-4a-OH to the resulting paraquinone by the monooxygenase dmxR10 then gives cyclohexadienone, which is then reduced at C-5 by the short chain dehydrogenase dmxR3 to give the dihydroxanthone. The 6,7-epoxide in the cryptosporioptides could be introduced by the cytochrome P450 monooxygenase dmxL3. The highly reducing PKS dmxL2 manufactures butyrate, which is further carboxylated by dmxL1 to form ethylmalonate. It is not yet clear whether the carboxylation occurs while the butyrate is attached to the ACP of dmxL2, but this unusual fungal metabolite could then be esterified to O-5 by the O-acetyltransferase dmxR13. Finally, dimerization performed by dmxR5 gives the observed dimers cryptosporioptides A, B and C as the final products of the pathway. This is Oxidoreductase dmxR7 from Cryptosporiopsis sp. (strain 8999).